An 881-amino-acid polypeptide reads, in one-letter code: Leucine--tRNA ligase (881 aa).

The 'HIGH' region motif lies at 48 to 58; sequence PYPSGKLHMGH. The 'KMSKS' region motif lies at 638–642; it reads KMSKS. Lysine 641 contributes to the ATP binding site.

It belongs to the class-I aminoacyl-tRNA synthetase family.

It localises to the cytoplasm. The catalysed reaction is tRNA(Leu) + L-leucine + ATP = L-leucyl-tRNA(Leu) + AMP + diphosphate. The polypeptide is Leucine--tRNA ligase (Janthinobacterium sp. (strain Marseille) (Minibacterium massiliensis)).